Reading from the N-terminus, the 377-residue chain is Fructose-bisphosphate aldolase 1, chloroplastic (377 aa).

The substrate site is built by Arg-74 and Lys-164. Glu-204 acts as the Proton acceptor in catalysis. Residue Lys-246 is the Schiff-base intermediate with dihydroxyacetone-P of the active site.

Belongs to the class I fructose-bisphosphate aldolase family.

The protein resides in the plastid. Its subcellular location is the chloroplast. The catalysed reaction is beta-D-fructose 1,6-bisphosphate = D-glyceraldehyde 3-phosphate + dihydroxyacetone phosphate. It functions in the pathway carbohydrate degradation; glycolysis; D-glyceraldehyde 3-phosphate and glycerone phosphate from D-glucose: step 4/4. This is Fructose-bisphosphate aldolase 1, chloroplastic (ALDCHL) from Chlamydomonas reinhardtii (Chlamydomonas smithii).